A 185-amino-acid chain; its full sequence is Probable chorismate pyruvate-lyase (185 aa).

Arginine 75, leucine 113, and glutamate 174 together coordinate substrate.

Belongs to the UbiC family.

It localises to the cytoplasm. It catalyses the reaction chorismate = 4-hydroxybenzoate + pyruvate. The protein operates within cofactor biosynthesis; ubiquinone biosynthesis. Its function is as follows. Removes the pyruvyl group from chorismate, with concomitant aromatization of the ring, to provide 4-hydroxybenzoate (4HB) for the ubiquinone pathway. In Aromatoleum aromaticum (strain DSM 19018 / LMG 30748 / EbN1) (Azoarcus sp. (strain EbN1)), this protein is Probable chorismate pyruvate-lyase.